The primary structure comprises 407 residues: Argininosuccinate synthase (407 aa).

10–18 serves as a coordination point for ATP; that stretch reads AYSGGLDTS. Positions 88 and 93 each coordinate L-citrulline. Glycine 118 serves as a coordination point for ATP. Positions 120, 124, and 125 each coordinate L-aspartate. Asparagine 124 lines the L-citrulline pocket. Residues arginine 128, serine 177, serine 186, glutamate 263, and tyrosine 275 each contribute to the L-citrulline site.

Belongs to the argininosuccinate synthase family. Type 1 subfamily. In terms of assembly, homotetramer.

It localises to the cytoplasm. The enzyme catalyses L-citrulline + L-aspartate + ATP = 2-(N(omega)-L-arginino)succinate + AMP + diphosphate + H(+). It functions in the pathway amino-acid biosynthesis; L-arginine biosynthesis; L-arginine from L-ornithine and carbamoyl phosphate: step 2/3. In Clostridium botulinum (strain Eklund 17B / Type B), this protein is Argininosuccinate synthase.